The sequence spans 473 residues: Xylosidase/arabinosidase (473 aa).

Aspartate 18 (proton acceptor) is an active-site residue. Glutamate 209 functions as the Proton donor in the catalytic mechanism.

It belongs to the glycosyl hydrolase 43 family. As to quaternary structure, homotetramer.

It carries out the reaction Hydrolysis of (1-&gt;4)-beta-D-xylans, to remove successive D-xylose residues from the non-reducing termini.. The catalysed reaction is Hydrolysis of terminal non-reducing alpha-L-arabinofuranoside residues in alpha-L-arabinosides.. In Thermoclostridium stercorarium (Clostridium stercorarium), this protein is Xylosidase/arabinosidase (xylA).